Reading from the N-terminus, the 203-residue chain is Microtubule-associated protein Jupiter (203 aa).

Residue Ser-30 is modified to Phosphoserine. Phosphothreonine is present on residues Thr-41 and Thr-102. A compositionally biased stretch (polar residues) spans 123–132 (LISKGNYNGK). 2 disordered regions span residues 123-163 (LISK…GNPV) and 182-203 (NGGSQVINKNRVPPGGYSSGLW). Positions 133–146 (SGSVSSASSSVSSS) are enriched in low complexity. Ser-135 and Ser-146 each carry phosphoserine.

Belongs to the MAP Jupiter family.

It localises to the nucleus. The protein resides in the cytoplasm. It is found in the cytoskeleton. The protein localises to the spindle. Binds to all microtubule populations. The chain is Microtubule-associated protein Jupiter from Drosophila mojavensis (Fruit fly).